The chain runs to 282 residues: Chorismate dehydratase (282 aa).

The protein belongs to the MqnA/MqnD family. MqnA subfamily.

It carries out the reaction chorismate = 3-[(1-carboxyvinyl)-oxy]benzoate + H2O. It functions in the pathway quinol/quinone metabolism; menaquinone biosynthesis. Functionally, catalyzes the dehydration of chorismate into 3-[(1-carboxyvinyl)oxy]benzoate, a step in the biosynthesis of menaquinone (MK, vitamin K2). The protein is Chorismate dehydratase of Streptomyces coelicolor (strain ATCC BAA-471 / A3(2) / M145).